A 122-amino-acid polypeptide reads, in one-letter code: Protein FLORAL ORGAN NUMBER2 (122 aa).

The first 25 residues, 1–25 (MGRLFLCLVVAWCWVALLLVAPVHG), serve as a signal peptide directing secretion. A disordered region spans residues 28–122 (GLPGEFSGDQ…PEHARSTGRP (95 aa)). Basic residues predominate over residues 54 to 63 (KQPRGVKGTR). A compositionally biased stretch (low complexity) spans 64–77 (RPSWSSWSSTASRS). Positions 111-122 (RRPEHARSTGRP) are enriched in basic and acidic residues.

Belongs to the CLV3/ESR signal peptide family.

The protein resides in the secreted. Probable extracellular signal that regulates meristem maintenance. May function as a putative ligand for a receptor complex including FON1. Regulates the size of the floral meristem and the number of floral organs. This chain is Protein FLORAL ORGAN NUMBER2 (FON2), found in Oryza sativa subsp. indica (Rice).